A 122-amino-acid chain; its full sequence is Large ribosomal subunit protein uL14c (122 aa).

It belongs to the universal ribosomal protein uL14 family. Part of the 50S ribosomal subunit.

The protein resides in the plastid. The protein localises to the chloroplast. Its function is as follows. Binds to 23S rRNA. This Chara vulgaris (Common stonewort) protein is Large ribosomal subunit protein uL14c.